We begin with the raw amino-acid sequence, 730 residues long: MSRRKISSESFSSLGSDYLETSPEEEGECPLSKLCWNGSRSPPGPPGSRAAAMAATPVPAASVAAAAAAVAAGSKRAQRRRRVNLDSLGESISLLTAPSPQTIHMTLKRTLQYYEHQVIGYRDAEKNFHNISNRCSSADHSNKEEIEDVSGILRCTANVLGLKFQEIQERFGEEFFKICFDENERVLRAVGSTLQDFFNGFDALLEHIRTSFGKQATLESPSFLCKELPEGTLKLHYFHPHHTVGFAMLGMIKAAGKRIYHLNVEVEQIENEKFCSDGSTPSNYSCLTFLIKECETTQITKNIPQGTSQIPTDLRISINTFCRTFPFHLMFDPNMVVLQLGEGLRKQLRCDNHKVLKFEDCFEIVSPKVNATFDRVLLRLSTPFVIRTKPEASGTDNEDKVMEIKGQMIHVPESNAILFLGSPCVDKLDELIGRGLHLSDIPIHDATRDVILVGEQAKAQDGLKKRMDKLKATLEKTHQALEEEKKKTVDLLYSIFPGDVAQQLWQRQQVQARKFDDVTMLFSDIVGFTAICAQCTPMQVISMLNELYTRFDHQCGFLDIYKVETIGDAYCVASGLHRKSLCHAKPIALMALKMMELSEEVLTPDGRPIQMRIGIHSGSVLAGVVGVRMPRYCLFGNNVTLASKFESGSHPRRINISPTTYQLLKREDSFTFIPRSREELPDNFPKEIPGVCYFLELRTGPKPPKPSLSSSRIKKVSYNIGTMFLRETSL.

Residues 1-53 (MSRRKISSESFSSLGSDYLETSPEEEGECPLSKLCWNGSRSPPGPPGSRAAAM) form a disordered region. A Guanylate cyclase domain is found at 519–646 (TMLFSDIVGF…NNVTLASKFE (128 aa)).

It belongs to the adenylyl cyclase class-4/guanylyl cyclase family. As to quaternary structure, heterodimer of an alpha and a beta chain.

It localises to the cytoplasm. It catalyses the reaction GTP = 3',5'-cyclic GMP + diphosphate. Activated by nitric oxide in the presence of magnesium or manganese ions. Has guanylyl cyclase on binding to the beta-1 subunit. The sequence is that of Guanylate cyclase soluble subunit alpha-2 (Gucy1a2) from Rattus norvegicus (Rat).